We begin with the raw amino-acid sequence, 210 residues long: Cytochrome c biogenesis ATP-binding export protein CcmA (210 aa).

The ABC transporter domain maps to 3–209; it reads LTVTNLACAR…PADDPFAGVT (207 aa). 35-42 contacts ATP; that stretch reads GPNGIGKT.

The protein belongs to the ABC transporter superfamily. CcmA exporter (TC 3.A.1.107) family. As to quaternary structure, the complex is composed of two ATP-binding proteins (CcmA) and two transmembrane proteins (CcmB).

Its subcellular location is the cell inner membrane. It carries out the reaction heme b(in) + ATP + H2O = heme b(out) + ADP + phosphate + H(+). Its function is as follows. Part of the ABC transporter complex CcmAB involved in the biogenesis of c-type cytochromes; once thought to export heme, this seems not to be the case, but its exact role is uncertain. Responsible for energy coupling to the transport system. The sequence is that of Cytochrome c biogenesis ATP-binding export protein CcmA from Cereibacter sphaeroides (strain ATCC 17023 / DSM 158 / JCM 6121 / CCUG 31486 / LMG 2827 / NBRC 12203 / NCIMB 8253 / ATH 2.4.1.) (Rhodobacter sphaeroides).